The following is a 959-amino-acid chain: Bifunctional premutilin synthase (959 aa).

The class II diterpene cyclase stretch occupies residues 1 to 542 (MGLSEDLHAR…ALNVPIPRFD (542 aa)). The short motif at 309–312 (DADM) is the DXDD motif element. The For class II diterpene cyclase activity role is filled by aspartate 311. The interval 543–959 (PASITTLPPI…TANGSNGIHH (417 aa)) is class I diterpene synthase. Aspartate 649 serves as the catalytic For class I diterpene synthase activity. Mg(2+)-binding residues include aspartate 649, aspartate 653, and asparagine 824. The DDXXD motif motif lies at 649-653 (DDYLD). The disordered stretch occupies residues 931 to 959 (KGANGVKKTNGLTTNGTKATANGSNGIHH). Over residues 934-959 (NGVKKTNGLTTNGTKATANGSNGIHH) the composition is skewed to low complexity.

This sequence belongs to the terpene synthase family. Mg(2+) is required as a cofactor.

Its pathway is secondary metabolite biosynthesis; terpenoid biosynthesis. Its function is as follows. Bifunctional premutilin synthase; part of the gene cluster that mediates the biosynthesis of pleuromutilin, a tricyclic diterpene showing antibacterial properties. The geranylgeranyl diphosphate (GGPP) synthase ple4 catalyzes the first step in pleuromutilin biosynthesis. GGPP is then substrate of the premutilin synthase (PS) ple3 to yield premutilin. Premutilin synthase is a bifunctional enzyme composed of the fusion of a class II diterpene cyclase (DTC) and a class I diterpene synthase (DTS), with the corresponding domains and active sites containing characteristic aspartate-rich motifs. GGPP is first converted to mutildienyl-diphosphate (MPP) at the class II DTC site. MPP is subsequently further cyclized at the class I DTS site, followed by a 1,5-hydride shift and addition of water prior to terminating deprotonation, to yield premutilin. The cytochrome P450 monooxygenases ple5 and ple6 hydroxylate premutilin at C-11 and C-3, respectively, producing 11-hydroxypremutilin and 3-hydroxypremutilin. The combination of the actions of both ple5 and ple6 leads to the production of 3,11-dihydroxypremutilin. The short chain dehydrogenase ple7 further converts 3,11-dihydroxypremutilin into mutilin. The acetyltransferase ple2 then acetylates mutilin to produce 14-O-acetylmutilin. Finally, the cytochrome P450 monooxygenase ple1 catalyzes hydroxylation on the alpha position of the acetyl side chain of 14-O-acetylmutilin to yield pleuromutilin. The protein is Bifunctional premutilin synthase of Rhodocybe pseudopiperita (Clitopilus pseudopiperitus).